Reading from the N-terminus, the 201-residue chain is LexA repressor 1 (201 aa).

The H-T-H motif DNA-binding region spans 27 to 47 (LAEIAQAFGFASRNAAQKHVQ). Residues S122 and K159 each act as for autocatalytic cleavage activity in the active site.

This sequence belongs to the peptidase S24 family. In terms of assembly, homodimer.

The enzyme catalyses Hydrolysis of Ala-|-Gly bond in repressor LexA.. Its function is as follows. Represses a number of genes involved in the response to DNA damage (SOS response), including recA and lexA. In the presence of single-stranded DNA, RecA interacts with LexA causing an autocatalytic cleavage which disrupts the DNA-binding part of LexA, leading to derepression of the SOS regulon and eventually DNA repair. The protein is LexA repressor 1 of Xanthomonas oryzae pv. oryzae (strain KACC10331 / KXO85).